Consider the following 332-residue polypeptide: 4-hydroxy-3-methylbut-2-enyl diphosphate reductase (332 aa).

Residue cysteine 34 participates in [4Fe-4S] cluster binding. The (2E)-4-hydroxy-3-methylbut-2-enyl diphosphate site is built by histidine 63 and histidine 96. Dimethylallyl diphosphate contacts are provided by histidine 63 and histidine 96. Residues histidine 63 and histidine 96 each contribute to the isopentenyl diphosphate site. Residue cysteine 118 coordinates [4Fe-4S] cluster. Histidine 146 is a (2E)-4-hydroxy-3-methylbut-2-enyl diphosphate binding site. Histidine 146 is a binding site for dimethylallyl diphosphate. Histidine 146 lines the isopentenyl diphosphate pocket. The active-site Proton donor is the glutamate 148. Residue threonine 186 coordinates (2E)-4-hydroxy-3-methylbut-2-enyl diphosphate. Residue cysteine 216 coordinates [4Fe-4S] cluster. Residues serine 244, serine 245, asparagine 246, and serine 289 each contribute to the (2E)-4-hydroxy-3-methylbut-2-enyl diphosphate site. Dimethylallyl diphosphate contacts are provided by serine 244, serine 245, asparagine 246, and serine 289. Isopentenyl diphosphate is bound by residues serine 244, serine 245, asparagine 246, and serine 289.

This sequence belongs to the IspH family. Requires [4Fe-4S] cluster as cofactor.

The catalysed reaction is isopentenyl diphosphate + 2 oxidized [2Fe-2S]-[ferredoxin] + H2O = (2E)-4-hydroxy-3-methylbut-2-enyl diphosphate + 2 reduced [2Fe-2S]-[ferredoxin] + 2 H(+). It carries out the reaction dimethylallyl diphosphate + 2 oxidized [2Fe-2S]-[ferredoxin] + H2O = (2E)-4-hydroxy-3-methylbut-2-enyl diphosphate + 2 reduced [2Fe-2S]-[ferredoxin] + 2 H(+). The protein operates within isoprenoid biosynthesis; dimethylallyl diphosphate biosynthesis; dimethylallyl diphosphate from (2E)-4-hydroxy-3-methylbutenyl diphosphate: step 1/1. It participates in isoprenoid biosynthesis; isopentenyl diphosphate biosynthesis via DXP pathway; isopentenyl diphosphate from 1-deoxy-D-xylulose 5-phosphate: step 6/6. In terms of biological role, catalyzes the conversion of 1-hydroxy-2-methyl-2-(E)-butenyl 4-diphosphate (HMBPP) into a mixture of isopentenyl diphosphate (IPP) and dimethylallyl diphosphate (DMAPP). Acts in the terminal step of the DOXP/MEP pathway for isoprenoid precursor biosynthesis. The chain is 4-hydroxy-3-methylbut-2-enyl diphosphate reductase from Mycobacterium ulcerans (strain Agy99).